We begin with the raw amino-acid sequence, 330 residues long: MNTEATQDHQEANTTGARLRHAREQLGLSQQAVAERLCLKVSTVRDIEDDKAPADLASTFLRGYIRSYARLVHIPEEELLPMMAKQAPIRAAKVAPMQSFSLGKRRKKRDGWLMSFTWLVLFVVIGLSGAWWWQDHKAQQEEISTMADQSSAELNGGDANSQNVPLDTSAPVDSGTDSAANSAPTDTASTPTTSAPAQTPADNNAVVAPSQANVDTAGTAPTTPATPASPLPTDQANVTTPAASAQDLVMNFSADCWLEVSDATGKKLFSGLQRKGGNLNLSGQAPYKLKIGAPAAVQIQFLGKPVDLSRFIRTNQVARLTLNAEQSPAQ.

The Cytoplasmic segment spans residues 1–111 (MNTEATQDHQ…LGKRRKKRDG (111 aa)). The HTH cro/C1-type domain maps to 19-71 (LRHAREQLGLSQQAVAERLCLKVSTVRDIEDDKAPADLASTFLRGYIRSYARL). The H-T-H motif DNA-binding region spans 30-49 (QQAVAERLCLKVSTVRDIED). Residues 112 to 132 (WLMSFTWLVLFVVIGLSGAWW) traverse the membrane as a helical; Signal-anchor for type II membrane protein segment. The Periplasmic portion of the chain corresponds to 133-330 (WQDHKAQQEE…TLNAEQSPAQ (198 aa)). Residues 146–166 (MADQSSAELNGGDANSQNVPL) are compositionally biased toward polar residues. Residues 146–237 (MADQSSAELN…ASPLPTDQAN (92 aa)) are disordered. Low complexity-rich tracts occupy residues 176–202 (TDSA…TPAD) and 216–233 (TAGT…PLPT).

This sequence belongs to the RodZ family.

It localises to the cell inner membrane. In terms of biological role, cytoskeletal protein that is involved in cell-shape control through regulation of the length of the long axis. The chain is Cytoskeleton protein RodZ from Klebsiella pneumoniae (strain 342).